The chain runs to 1776 residues: Non-structural replication polyprotein (1776 aa).

The 162-residue stretch at 58–219 (SGFGCNPHPH…DQPLDAISWL (162 aa)) folds into the Alphavirus-like MT domain. Residues 546 to 582 (IALPPPIFRVPPPLPAQETPSPPAPALVPPTQPPQPQ) are compositionally biased toward pro residues. Disordered regions lie at residues 546–583 (IALPPPIFRVPPPLPAQETPSPPAPALVPPTQPPQPQP) and 595–615 (LNASSHKPSPSSAPLESPSPI). Residues 658–812 (PFPSSDLLSD…KLAAAAPGSN (155 aa)) enclose the Peptidase C21 domain. Active-site for protease activity residues include cysteine 711 and histidine 797. Residues 866-1026 (SGPSNKSPKM…RLSKYIDCYC (161 aa)) form the (+)RNA virus helicase ATP-binding domain. ATP is bound at residue 899–906 (GFPGCGKS). Positions 1027-1159 (WWTYRCPKAV…LPVDMMSAFP (133 aa)) constitute a (+)RNA virus helicase C-terminal domain. The RdRp catalytic domain maps to 1497-1603 (DAYICNDYTS…CGHPPINPNW (107 aa)).

This sequence belongs to the Tymoviridae non-structural replication polyprotein family. Post-translationally, specific enzymatic cleavages by the host yield mature proteins.

The catalysed reaction is RNA(n) + a ribonucleoside 5'-triphosphate = RNA(n+1) + diphosphate. Its function is as follows. Acts as a cysteine protease, methyltransferase and deubiquitinase. The cysteine protease activity cleaves the polyprotein giving rise to mature proteins. The methyltransferase domain is probably involved in viral RNA capping. RNA-directed RNA polymerase is responsible for the replication and transcription of the genome. The chain is Non-structural replication polyprotein from Ononis yellow mosaic virus.